Here is a 431-residue protein sequence, read N- to C-terminus: Enolase (431 aa).

Residue Gln-163 coordinates (2R)-2-phosphoglycerate. Residue Glu-205 is the Proton donor of the active site. The Mg(2+) site is built by Asp-242, Glu-288, and Asp-315. Positions 340, 369, 370, and 391 each coordinate (2R)-2-phosphoglycerate. Lys-340 functions as the Proton acceptor in the catalytic mechanism.

It belongs to the enolase family. Mg(2+) is required as a cofactor.

The protein resides in the cytoplasm. It localises to the secreted. Its subcellular location is the cell surface. It catalyses the reaction (2R)-2-phosphoglycerate = phosphoenolpyruvate + H2O. The protein operates within carbohydrate degradation; glycolysis; pyruvate from D-glyceraldehyde 3-phosphate: step 4/5. Catalyzes the reversible conversion of 2-phosphoglycerate (2-PG) into phosphoenolpyruvate (PEP). It is essential for the degradation of carbohydrates via glycolysis. This is Enolase from Bacillus cereus (strain G9842).